We begin with the raw amino-acid sequence, 500 residues long: L-arabinose isomerase (500 aa).

4 residues coordinate Mn(2+): Glu-306, Glu-333, His-350, and His-450.

The protein belongs to the arabinose isomerase family. As to quaternary structure, homohexamer. Mn(2+) is required as a cofactor.

It carries out the reaction beta-L-arabinopyranose = L-ribulose. It participates in carbohydrate degradation; L-arabinose degradation via L-ribulose; D-xylulose 5-phosphate from L-arabinose (bacterial route): step 1/3. Functionally, catalyzes the conversion of L-arabinose to L-ribulose. In Salmonella paratyphi A (strain ATCC 9150 / SARB42), this protein is L-arabinose isomerase.